The sequence spans 396 residues: 1-deoxy-D-xylulose 5-phosphate reductoisomerase (396 aa).

NADPH-binding residues include Thr-13, Gly-14, Ser-15, Ile-16, and Asn-127. Position 128 (Lys-128) interacts with 1-deoxy-D-xylulose 5-phosphate. Glu-129 provides a ligand contact to NADPH. Asp-153 is a Mn(2+) binding site. Residues Ser-154, Glu-155, Ser-184, and His-207 each contribute to the 1-deoxy-D-xylulose 5-phosphate site. Glu-155 contributes to the Mn(2+) binding site. NADPH is bound at residue Gly-213. 1-deoxy-D-xylulose 5-phosphate contacts are provided by Ser-220, Asn-225, Lys-226, and Glu-229. Glu-229 is a Mn(2+) binding site.

This sequence belongs to the DXR family. Requires Mg(2+) as cofactor. Mn(2+) serves as cofactor.

The catalysed reaction is 2-C-methyl-D-erythritol 4-phosphate + NADP(+) = 1-deoxy-D-xylulose 5-phosphate + NADPH + H(+). It functions in the pathway isoprenoid biosynthesis; isopentenyl diphosphate biosynthesis via DXP pathway; isopentenyl diphosphate from 1-deoxy-D-xylulose 5-phosphate: step 1/6. Functionally, catalyzes the NADPH-dependent rearrangement and reduction of 1-deoxy-D-xylulose-5-phosphate (DXP) to 2-C-methyl-D-erythritol 4-phosphate (MEP). The protein is 1-deoxy-D-xylulose 5-phosphate reductoisomerase of Pseudomonas paraeruginosa (strain DSM 24068 / PA7) (Pseudomonas aeruginosa (strain PA7)).